The primary structure comprises 252 residues: Adapter protein MecA (252 aa).

This sequence belongs to the MecA family. In terms of assembly, homodimer.

In terms of biological role, enables the recognition and targeting of unfolded and aggregated proteins to the ClpC protease or to other proteins involved in proteolysis. The polypeptide is Adapter protein MecA (Streptococcus uberis (strain ATCC BAA-854 / 0140J)).